The primary structure comprises 781 residues: 5-methyltetrahydropteroyltriglutamate--homocysteine methyltransferase (781 aa).

Residues 20-23 (RELK) and K131 contribute to the 5-methyltetrahydropteroyltri-L-glutamate site. L-homocysteine is bound by residues 453–455 (IGS) and E506. L-methionine is bound by residues 453-455 (IGS) and E506. 5-methyltetrahydropteroyltri-L-glutamate-binding positions include 537–538 (RC) and W583. D621 lines the L-homocysteine pocket. An L-methionine-binding site is contributed by D621. Residue E627 participates in 5-methyltetrahydropteroyltri-L-glutamate binding. Positions 663, 665, and 687 each coordinate Zn(2+). The active-site Proton donor is H716. Zn(2+) is bound at residue C748.

The protein belongs to the vitamin-B12 independent methionine synthase family. Requires Zn(2+) as cofactor.

It catalyses the reaction 5-methyltetrahydropteroyltri-L-glutamate + L-homocysteine = tetrahydropteroyltri-L-glutamate + L-methionine. Its pathway is amino-acid biosynthesis; L-methionine biosynthesis via de novo pathway; L-methionine from L-homocysteine (MetE route): step 1/1. Catalyzes the transfer of a methyl group from 5-methyltetrahydrofolate to homocysteine resulting in methionine formation. This chain is 5-methyltetrahydropteroyltriglutamate--homocysteine methyltransferase, found in Bradyrhizobium diazoefficiens (strain JCM 10833 / BCRC 13528 / IAM 13628 / NBRC 14792 / USDA 110).